The chain runs to 300 residues: UPF0282 protein TON_1363 (300 aa).

Belongs to the UPF0282 family.

The protein is UPF0282 protein TON_1363 of Thermococcus onnurineus (strain NA1).